The chain runs to 445 residues: Ribosomal protein uS12 methylthiotransferase RimO (445 aa).

The 111-residue stretch at 10 to 120 folds into the MTTase N-terminal domain; it reads PKVGFVSLGC…VVNAVHEVVP (111 aa). 6 residues coordinate [4Fe-4S] cluster: Cys-19, Cys-55, Cys-84, Cys-153, Cys-157, and Cys-160. One can recognise a Radical SAM core domain in the interval 139–378; the sequence is LTPRHYAYLK…AHQQEISSAR (240 aa). A TRAM domain is found at 380–445; sequence QQRIGKEIEV…DEYDLWAETL (66 aa).

This sequence belongs to the methylthiotransferase family. RimO subfamily. The cofactor is [4Fe-4S] cluster.

It localises to the cytoplasm. It carries out the reaction L-aspartate(89)-[ribosomal protein uS12]-hydrogen + (sulfur carrier)-SH + AH2 + 2 S-adenosyl-L-methionine = 3-methylsulfanyl-L-aspartate(89)-[ribosomal protein uS12]-hydrogen + (sulfur carrier)-H + 5'-deoxyadenosine + L-methionine + A + S-adenosyl-L-homocysteine + 2 H(+). Its function is as follows. Catalyzes the methylthiolation of an aspartic acid residue of ribosomal protein uS12. This is Ribosomal protein uS12 methylthiotransferase RimO from Pseudomonas fluorescens (strain ATCC BAA-477 / NRRL B-23932 / Pf-5).